We begin with the raw amino-acid sequence, 333 residues long: Phosphate acyltransferase (333 aa).

This sequence belongs to the PlsX family. Homodimer. Probably interacts with PlsY.

It localises to the cytoplasm. It carries out the reaction a fatty acyl-[ACP] + phosphate = an acyl phosphate + holo-[ACP]. It participates in lipid metabolism; phospholipid metabolism. Catalyzes the reversible formation of acyl-phosphate (acyl-PO(4)) from acyl-[acyl-carrier-protein] (acyl-ACP). This enzyme utilizes acyl-ACP as fatty acyl donor, but not acyl-CoA. In Bacillus subtilis (strain 168), this protein is Phosphate acyltransferase.